Here is a 126-residue protein sequence, read N- to C-terminus: Large ribosomal subunit protein bL17 (126 aa).

It belongs to the bacterial ribosomal protein bL17 family. In terms of assembly, part of the 50S ribosomal subunit. Contacts protein L32.

This Lawsonia intracellularis (strain PHE/MN1-00) protein is Large ribosomal subunit protein bL17.